The following is a 226-amino-acid chain: 2-C-methyl-D-erythritol 4-phosphate cytidylyltransferase (226 aa).

The protein belongs to the IspD/TarI cytidylyltransferase family. IspD subfamily.

The enzyme catalyses 2-C-methyl-D-erythritol 4-phosphate + CTP + H(+) = 4-CDP-2-C-methyl-D-erythritol + diphosphate. Its pathway is isoprenoid biosynthesis; isopentenyl diphosphate biosynthesis via DXP pathway; isopentenyl diphosphate from 1-deoxy-D-xylulose 5-phosphate: step 2/6. Functionally, catalyzes the formation of 4-diphosphocytidyl-2-C-methyl-D-erythritol from CTP and 2-C-methyl-D-erythritol 4-phosphate (MEP). The protein is 2-C-methyl-D-erythritol 4-phosphate cytidylyltransferase of Microcystis aeruginosa (strain NIES-843 / IAM M-2473).